We begin with the raw amino-acid sequence, 401 residues long: Glutamyl-tRNA reductase (401 aa).

Substrate-binding positions include T45–R48, S101, E106–Q108, and Q112. The active-site Nucleophile is the C46. G177–G182 contributes to the NADP(+) binding site.

Belongs to the glutamyl-tRNA reductase family. In terms of assembly, homodimer.

The catalysed reaction is (S)-4-amino-5-oxopentanoate + tRNA(Glu) + NADP(+) = L-glutamyl-tRNA(Glu) + NADPH + H(+). Its pathway is porphyrin-containing compound metabolism; protoporphyrin-IX biosynthesis; 5-aminolevulinate from L-glutamyl-tRNA(Glu): step 1/2. Catalyzes the NADPH-dependent reduction of glutamyl-tRNA(Glu) to glutamate 1-semialdehyde (GSA). This chain is Glutamyl-tRNA reductase, found in Clostridium botulinum (strain Eklund 17B / Type B).